A 338-amino-acid polypeptide reads, in one-letter code: MEKQTVAVLGPGSWGTALSQVLNDNGHEVRIWGNLPEQINEINTHHTNKHYFKDVVLDENIIAYTDLAETLKDVDAILFVVPTKVTRLVAQQVAQTLDHKVIIMHASKGLEPDSHKRLSTILEEEIPEHLRSDIVVVSGPSHAXETIVRDLTLITAASKDLQTAQYVQELFSNHYFRLYTNTDVIGVETAGALKNIIAVGAGALHGLGFGDNAKAAIIARGLAEITRLGVALGANPLTYSGLSGVGDLIVTGTSIHSRNWRAGDALGRGESLADIEANMGMVIEGISTTRAAYELAQELGVYMPITQAIYQVIYHGTNIKDAIYDIMNNEFKAENEWS.

3 residues coordinate NADPH: serine 13, tryptophan 14, and lysine 108. Sn-glycerol 3-phosphate-binding residues include lysine 108, glycine 139, and serine 141. Alanine 143 contacts NADPH. Residues lysine 194, aspartate 247, serine 257, arginine 258, and asparagine 259 each coordinate sn-glycerol 3-phosphate. Residue lysine 194 is the Proton acceptor of the active site. Arginine 258 is an NADPH binding site. 2 residues coordinate NADPH: valine 282 and glutamate 284.

Belongs to the NAD-dependent glycerol-3-phosphate dehydrogenase family.

Its subcellular location is the cytoplasm. It catalyses the reaction sn-glycerol 3-phosphate + NAD(+) = dihydroxyacetone phosphate + NADH + H(+). It carries out the reaction sn-glycerol 3-phosphate + NADP(+) = dihydroxyacetone phosphate + NADPH + H(+). The protein operates within membrane lipid metabolism; glycerophospholipid metabolism. Catalyzes the reduction of the glycolytic intermediate dihydroxyacetone phosphate (DHAP) to sn-glycerol 3-phosphate (G3P), the key precursor for phospholipid synthesis. The protein is Glycerol-3-phosphate dehydrogenase [NAD(P)+] of Streptococcus pneumoniae serotype 19F (strain G54).